The chain runs to 1048 residues: [F-actin]-monooxygenase MICAL1 (1048 aa).

A monooxygenase domain region spans residues 1–489 (MASPASTNPA…QDLYDMMDKE (489 aa)). FAD is bound by residues Cys-95, 114 to 116 (EKR), 121 to 123 (RHN), Phe-181, Tyr-293, and Asp-393. The residue at position 475 (Thr-475) is a Phosphothreonine. Over residues 488–502 (KEHAQRKSDEPDSRK) the composition is skewed to basic and acidic residues. Residues 488 to 508 (KEHAQRKSDEPDSRKTTTGSA) are disordered. The Calponin-homology (CH) domain maps to 507–611 (SAGTEELLHW…YLSHFHSAFK (105 aa)). A Phosphoserine modification is found at Ser-616. The interval 643-676 (TRAKVDEETPSTEEPPVSEPSMSPNTPELSEHQE) is disordered. Low complexity predominate over residues 654–666 (TEEPPVSEPSMSP). Residues 681–743 (ELCELCGKHL…LQHLPQEDQK (63 aa)) form the LIM zinc-binding domain. The Zn(2+) site is built by Cys-683, Cys-686, His-704, Cys-707, Cys-710, Cys-713, Cys-733, and His-736. 3 disordered regions span residues 741–787 (DQKE…QPAR), 805–825 (IIPD…SDLA), and 839–873 (PVQA…PPLE). Polar residues predominate over residues 747–765 (NNGSLESQELPTPGDSNMQ). Positions 772–787 (PVTRVSPVPSPSQPAR) are enriched in low complexity. Residues Ser-777 and Ser-781 each carry the phosphoserine modification. Coiled-coil stretches lie at residues 847-867 (EAIE…EEEE), 906-949 (EEEM…ESSS), and 974-1031 (EEAE…VNQR). Residues 852–868 (GDDEEEEEEEEEEEEEP) show a composition bias toward acidic residues. In terms of domain architecture, bMERB spans 905-1048 (KEEEMKRFCK…EERRLREMPA (144 aa)).

It belongs to the Mical family. As to quaternary structure, associates with the SH3 domain of NEDD9. Interacts with VIM and PLXNA3. Interacts with RAB1B, RAB8A, RAB10, RAB13 and RAB15 (in their GTP-bound forms); binding to RAB1B is of low affinity compared to other Rab proteins; at least in case of RAB8A and RAB10 can bind 2 molecules of the Rab proteins simultaneously. Interacts with STK38 and STK38L. Interacts with GRAF1/ARHGAP26, GRAF2/ARHGAP10, RAB8A, RAB8B and RAB10; may bind simultaneously to GRAFs and Rabs and connects GRAFs to Rabs. Does not interact with RAB1 and RAB11A. FAD serves as cofactor. Expressed in the postnatal and adult hippocampus; found in dentate gyrus, the polymorphic layer, cornu ammonis (CA) 1-3 and in mossy fibers of the striatum lucidum. In adult hippocampus strongly expressed in CA3 pyramidial neurons.

It is found in the cytoplasm. It localises to the cytoskeleton. The protein localises to the endosome membrane. Its subcellular location is the midbody. It carries out the reaction L-methionyl-[F-actin] + NADPH + O2 + H(+) = L-methionyl-(R)-S-oxide-[F-actin] + NADP(+) + H2O. The enzyme catalyses NADPH + O2 + H(+) = H2O2 + NADP(+). Monooxygenase that promotes depolymerization of F-actin by mediating oxidation of specific methionine residues on actin to form methionine-sulfoxide, resulting in actin filament disassembly and preventing repolymerization. In the absence of actin, it also functions as a NADPH oxidase producing H(2)O(2). Acts as a cytoskeletal regulator that connects NEDD9 to intermediate filaments. Also acts as a negative regulator of apoptosis via its interaction with STK38 and STK38L; acts by antagonizing STK38 and STK38L activation by MST1/STK4. Involved in regulation of lamina-specific connectivity in the nervous system such as the development of lamina-restricted hippocampal connections. Through redox regulation of the actin cytoskeleton controls the intracellular distribution of secretory vesicles containing L1/neurofascin/NgCAM family proteins in neurons, thereby regulating their cell surface levels. May act as Rab effector protein and play a role in vesicle trafficking. Promotes endosomal tubule extension by associating with RAB8 (RAB8A or RAB8B), RAB10 and GRAF (GRAF1/ARHGAP26 or GRAF2/ARHGAP10) on the endosomal membrane which may connect GRAFs to Rabs, thereby participating in neosynthesized Rab8-Rab10-Rab11-dependent protein export. The chain is [F-actin]-monooxygenase MICAL1 (Mical1) from Mus musculus (Mouse).